A 340-amino-acid polypeptide reads, in one-letter code: GTP 3',8-cyclase (340 aa).

The region spanning 20 to 246 (RFERQYVYLR…PKALSDGPAK (227 aa)) is the Radical SAM core domain. Arg-29 contacts GTP. [4Fe-4S] cluster contacts are provided by Cys-36 and Cys-40. Tyr-42 lines the S-adenosyl-L-methionine pocket. Residue Cys-43 coordinates [4Fe-4S] cluster. Arg-79 lines the GTP pocket. Position 83 (Gly-83) interacts with S-adenosyl-L-methionine. Position 110 (Thr-110) interacts with GTP. Ser-134 contacts S-adenosyl-L-methionine. Lys-171 is a GTP binding site. Met-205 lines the S-adenosyl-L-methionine pocket. Residues Cys-268 and Cys-271 each contribute to the [4Fe-4S] cluster site. 273–275 (RLR) contacts GTP. Cys-285 serves as a coordination point for [4Fe-4S] cluster.

It belongs to the radical SAM superfamily. MoaA family. Monomer and homodimer. [4Fe-4S] cluster is required as a cofactor.

It catalyses the reaction GTP + AH2 + S-adenosyl-L-methionine = (8S)-3',8-cyclo-7,8-dihydroguanosine 5'-triphosphate + 5'-deoxyadenosine + L-methionine + A + H(+). It participates in cofactor biosynthesis; molybdopterin biosynthesis. Catalyzes the cyclization of GTP to (8S)-3',8-cyclo-7,8-dihydroguanosine 5'-triphosphate. The sequence is that of GTP 3',8-cyclase from Actinobacillus pleuropneumoniae serotype 5b (strain L20).